Reading from the N-terminus, the 779-residue chain is Kazrin (779 aa).

The stretch at 79 to 261 (AQVLLREEVV…LATLTKDVPK (183 aa)) forms a coiled coil. A disordered region spans residues 295-366 (QQTLYHSHPP…PGPVQKSLHN (72 aa)). Phosphoserine is present on residues Ser356, Ser371, and Ser391. The interval 403–429 (KSLDPGLFDDSDSQCSPTRHSLSLSEG) is disordered. Residues 415 to 426 (SQCSPTRHSLSL) are compositionally biased toward polar residues. SAM domains follow at residues 450-515 (WKAG…YRDA), 528-592 (DHHW…LYQV), and 616-683 (WTNQ…STIF). Positions 685 to 779 (PSNSTGIRES…GYGSLEVTNV (95 aa)) are disordered. Residues 736–746 (SSKEPDFHDDY) are compositionally biased toward basic and acidic residues.

Belongs to the kazrin family. In terms of tissue distribution, expressed in skin interfollicular epidermis and hair follicles. Expressed in tongue epithelium basal suprabasal layers.

The protein resides in the cell junction. It localises to the nucleus. Its subcellular location is the cytoplasm. It is found in the cytoskeleton. Its function is as follows. Component of the cornified envelope of keratinocytes. May be involved in the interplay between adherens junctions and desmosomes. The function in the nucleus is not known. The protein is Kazrin (Kazn) of Mus musculus (Mouse).